A 74-amino-acid chain; its full sequence is ATP synthase subunit c (74 aa).

2 consecutive transmembrane segments (helical) span residues 5 to 25 (LAHI…IGVG) and 49 to 69 (LFIG…VALL).

It belongs to the ATPase C chain family. In terms of assembly, F-type ATPases have 2 components, F(1) - the catalytic core - and F(0) - the membrane proton channel. F(1) has five subunits: alpha(3), beta(3), gamma(1), delta(1), epsilon(1). F(0) has three main subunits: a(1), b(2) and c(10-14). The alpha and beta chains form an alternating ring which encloses part of the gamma chain. F(1) is attached to F(0) by a central stalk formed by the gamma and epsilon chains, while a peripheral stalk is formed by the delta and b chains.

The protein localises to the cell inner membrane. Functionally, f(1)F(0) ATP synthase produces ATP from ADP in the presence of a proton or sodium gradient. F-type ATPases consist of two structural domains, F(1) containing the extramembraneous catalytic core and F(0) containing the membrane proton channel, linked together by a central stalk and a peripheral stalk. During catalysis, ATP synthesis in the catalytic domain of F(1) is coupled via a rotary mechanism of the central stalk subunits to proton translocation. Its function is as follows. Key component of the F(0) channel; it plays a direct role in translocation across the membrane. A homomeric c-ring of between 10-14 subunits forms the central stalk rotor element with the F(1) delta and epsilon subunits. The sequence is that of ATP synthase subunit c from Ruegeria pomeroyi (strain ATCC 700808 / DSM 15171 / DSS-3) (Silicibacter pomeroyi).